Here is a 312-residue protein sequence, read N- to C-terminus: Olfactory receptor-like protein COR2 (312 aa).

Over 1 to 26 the chain is Extracellular; that stretch reads MASGNCTTPTTFILSGLTDNPRLQMP. N-linked (GlcNAc...) asparagine glycosylation occurs at N5. A helical transmembrane segment spans residues 27-49; the sequence is LFMVFLVIYTTTLLTNLGLIALI. The Cytoplasmic portion of the chain corresponds to 50-57; the sequence is GMDLHLQT. Residues 58 to 79 traverse the membrane as a helical segment; it reads PMYIFLQNLSFTDAAYSTVITP. Residues 80 to 100 are Extracellular-facing; it reads KMLATFLEERRTISYVGCILQ. The cysteines at positions 97 and 179 are disulfide-linked. The chain crosses the membrane as a helical span at residues 101–120; the sequence is YFSFVLLTTSEWLLLAVMAY. The Cytoplasmic segment spans residues 121–139; it reads DRYVAICKPLLYPSIMTKA. Residues 140–164 form a helical membrane-spanning segment; sequence VCWRLVKGLYSLAFLNSLVHTSGLL. Residues 165–205 lie on the Extracellular side of the membrane; it reads KLSFCSSNVVNHFFCDNRPLFQISSSSTTLNELLVIISGSL. Residues 206 to 226 form a helical membrane-spanning segment; sequence FVMSSIITILISYVFIILTVV. Residues 227–239 lie on the Cytoplasmic side of the membrane; the sequence is MIRSKDGKYKAFS. Residues 240 to 260 traverse the membrane as a helical segment; sequence TCTSHLMAVSLFHGTVIFMYL. Residues 261 to 271 lie on the Extracellular side of the membrane; sequence RSVKLFSLDTD. Residues 272-292 form a helical membrane-spanning segment; that stretch reads KIASLFYTVVIPMLNPLIYSW. The Cytoplasmic portion of the chain corresponds to 293 to 312; sequence RNKEVKDALRRLTATSVWLH.

It belongs to the G-protein coupled receptor 1 family.

The protein localises to the cell membrane. Odorant receptor. The polypeptide is Olfactory receptor-like protein COR2 (COR2) (Gallus gallus (Chicken)).